A 3931-amino-acid chain; its full sequence is Replicase polyprotein 1ab (3931 aa).

A C4-type; atypical zinc finger spans residues 8 to 28 (CTCTPNARVFVAEGQVYCTRC). Residues 69-182 (ECSPAGACWL…FCPFECAMAD (114 aa)) form a PCP1-alpha region. Catalysis depends on for nsp1-alpha papain-like cysteine proteinase activity residues Cys76 and His146. Residues 199 to 200 (VS) are important for host EIF2AK2 inhibition. Catalysis depends on for nsp1-beta papain-like cysteine proteinase activity residues Cys270 and His339. The interval 426 to 513 (LKRYSPPAEG…GEHWTVSVIP (88 aa)) is OTU-like. The 109-residue stretch at 428–536 (RYSPPAEGNC…GCCEHKGGLV (109 aa)) folds into the Peptidase C33 domain. Residues Cys437 and His506 each act as for nsp2 cysteine proteinase activity in the active site. Disordered regions lie at residues 809–868 (RWTP…VGGP) and 1118–1164 (TDEL…TGGV). Positions 810–819 (WTPPPPPPRV) are enriched in pro residues. A compositionally biased stretch (basic and acidic residues) spans 1139–1151 (PAKDPRMSPRESD). Transmembrane regions (helical) follow at residues 1221–1241 (SGYSPGDWGFAAFTLFCLFLC), 1266–1286 (GVFGCWLAFAVGLFKPVSDPV), and 1339–1359 (WHFLLRLGIVADCILAGAYVL). The segment at 1236–1359 (FCLFLCYSYP…DCILAGAYVL (124 aa)) is HD1. The interval 1414 to 1438 (TGWRGCWTGRSPIEQPSEKPIAFAQ) is WCCH. Transmembrane regions (helical) follow at residues 1554-1574 (IAALHVACSMALHMLAGVYVT), 1607-1627 (LCISQHGLTLPLTALVAGFGL), 1629-1649 (EIALVVLIFVSIGGMAHRLSC), 1659-1679 (AIASYVWVPLTWLLCVFPCWL), and 1695-1715 (FLISVNIPSGILAVVLLVSLW). The tract at residues 1554–1715 (IAALHVACSM…LAVVLLVSLW (162 aa)) is HD2. Catalysis depends on charge relay system; for serine protease nsp4 activity residues His1818, Asp1843, and Ser1897. The next 4 membrane-spanning stretches (helical) occupy residues 2006–2026 (WTPLVAVGFFILNEILPAVLV), 2030–2050 (FSFGMFVLSWLTPWSAQVLMI), 2064–2084 (LGFYSLGAVTSFVADLAVTQG), and 2107–2127 (SPVPVIACGVVHLLAIILYLF). The segment at 2006–2127 (WTPLVAVGFF…HLLAIILYLF (122 aa)) is HD3.

The protein belongs to the arteriviridae polyprotein family. Nsp1-alpha papain-like: Interacts with host RNF31. In terms of assembly, interacts with host EIF2AK2; this interaction occurs in host stress granules and leads to EIF2AK2 inhibition. Interacts with host G3BP1; this interaction probably plays a role in Nsp1-beta-mediated inhibition of host EIF2AK2. As to quaternary structure, interacts with host DDX18; this interaction redistributes host DDX18 to the cytoplasm. Interacts with host IFITM1. In terms of assembly, interacts with host DDX5. As to quaternary structure, interacts with host OTULIN. Interacts with host LGALS3. Specific enzymatic cleavages in vivo by its own proteases yield mature proteins. Nsp1 is autocleaved into two subunits, Nsp1-alpha and Nsp1-beta. There are two alternative pathways for processing. Either nsp4-5 is cleaved, which represents the major pathway or the nsp5-6 and nsp6-7 are processed, which represents the minor pathway. The major pathway occurs when nsp2 acts as a cofactor for nsp4.

The protein localises to the host nucleus. Its subcellular location is the host cytoplasm. The protein resides in the host membrane. It localises to the host endoplasmic reticulum. It is found in the host perinuclear region. It catalyses the reaction RNA(n) + a ribonucleoside 5'-triphosphate = RNA(n+1) + diphosphate. It carries out the reaction ATP + H2O = ADP + phosphate + H(+). The enzyme catalyses Thiol-dependent hydrolysis of ester, thioester, amide, peptide and isopeptide bonds formed by the C-terminal Gly of ubiquitin (a 76-residue protein attached to proteins as an intracellular targeting signal).. The catalysed reaction is uridylyl-uridylyl-ribonucleotide-RNA = a 3'-end uridylyl-2',3'-cyclophospho-uridine-RNA + a 5'-end dephospho-ribonucleoside-RNA. Functionally, contains the activities necessary for the transcription of negative stranded RNA, leader RNA, subgenomic mRNAs and progeny virion RNA as well as proteinases responsible for the cleavage of the polyprotein into functional products. Its function is as follows. Inhibits host IFN-beta production. Plays a role in the degradation of the host transcriptional activator CREBBP protein. The degradation of host CREBBP which is a key component of the IFN enhanceosome is likely responsible for the inhibition of interferon mediated by Nsp1-alpha. Also participates in the inhibition of host NF-kappa-B activation by counteracting LUBAC-dependent induction of NF-kappa-B. Reduces host NEMO ubiquitination by blocking the interaction between the two LUBAC complex components RNF31 and SHARPIN. Plays a role in blocking host mRNA nuclear export to the cytoplasm and subversion of host protein synthesis. Additionally, inhibits the interferon-activated JAK/STAT signal transduction by mediating the ubiquitination and subsequent proteasomal degradation of host KPNA1. Repurposes the host antiviral stress granules into a proviral platform to counteract the EIF2AK2/PKR restriction, thereby regulating the host inflammatory response. In terms of biological role, multifunctional protein that acts as a viral protease and as a viral antagonist of host immune response. Cleaves the nsp2/nsp3 site in the viral polyprotein. Displays deubiquitinating activity that cleaves both ubiquitinated and ISGylated products and therefore inhibits ubiquitin and ISG15-dependent host innate immunity. Also deubiquinates host NFKBIA, thereby interfering with NFKBIA degradation and impairing subsequent NF-kappa-B activation. Functionally, plays a role in the inhibition of the immune response by interacting with host IFITM1. This interaction leads to the proteasomal degradation of the IFN-induced antiviral protein IFITM1. Its function is as follows. Cleaves the majority of cleavage sites present in the C-terminus of the polyprotein. Triggers host apoptosis through caspase-3, -8, and -9 activations. Subverts host innate immune responses through its protease activity. Targets the NF-kappa-B essential modulator NEMO and mediates its cleavage. Blocks host interferon beta induction and downstream signaling by cleaving mitochondrial MAVS, dislodging it from the mitochondria. Impairs host defense by cleaving host mRNA-decapping enzyme DCP1A to attenuate its antiviral activity. Plays a role in the initial induction of autophagosomes from host endoplasmic reticulum. In terms of biological role, plays a role in the inhibition of host STAT3 signaling pathway by inducing the degradation of STAT3. Functionally, responsible for replication and transcription of the viral RNA genome. Its function is as follows. Displays RNA and DNA duplex-unwinding activities with 5' to 3' polarity. Plays a role in viral transcription/replication and prevents the simultaneous activation of host cell dsRNA sensors, such as MDA5/IFIH1, OAS, PKR and NLRP3 inflammasome. Acts by degrading the 5'-polyuridines generated during replication of the poly(A) region of viral genomic and subgenomic RNAs. Catalyzes a two-step reaction in which a 2'3'-cyclic phosphate (2'3'-cP) is first generated by 2'-O transesterification, which is then hydrolyzed to a 3'-phosphate (3'-P). If not degraded, poly(U) RNA would hybridize with poly(A) RNA tails and activate host dsRNA sensors. Also plays a role in the inhibition of host type I interferon production by recruiting host OTULIN to promote removal of linear ubiquitination targeting host NEMO. The protein is Replicase polyprotein 1ab of Porcine reproductive and respiratory syndrome virus (PRRSV).